The following is a 66-amino-acid chain: Large ribosomal subunit protein uL29 (66 aa).

It belongs to the universal ribosomal protein uL29 family.

This is Large ribosomal subunit protein uL29 from Bacillus mycoides (strain KBAB4) (Bacillus weihenstephanensis).